A 345-amino-acid polypeptide reads, in one-letter code: Aspartate-semialdehyde dehydrogenase (345 aa).

Residues 11–14 (TGQV) and 39–40 (RS) each bind NADP(+). Phosphate is bound at residue Arg-99. The Acyl-thioester intermediate role is filled by Cys-130. Gln-157 contributes to the substrate binding site. Residue 160-161 (SG) coordinates NADP(+). Lys-227 serves as a coordination point for phosphate. Arg-249 provides a ligand contact to substrate. His-256 functions as the Proton acceptor in the catalytic mechanism. NADP(+) is bound at residue Asn-325.

Belongs to the aspartate-semialdehyde dehydrogenase family. In terms of assembly, homodimer.

The enzyme catalyses L-aspartate 4-semialdehyde + phosphate + NADP(+) = 4-phospho-L-aspartate + NADPH + H(+). The protein operates within amino-acid biosynthesis; L-lysine biosynthesis via DAP pathway; (S)-tetrahydrodipicolinate from L-aspartate: step 2/4. Its pathway is amino-acid biosynthesis; L-methionine biosynthesis via de novo pathway; L-homoserine from L-aspartate: step 2/3. It participates in amino-acid biosynthesis; L-threonine biosynthesis; L-threonine from L-aspartate: step 2/5. Functionally, catalyzes the NADPH-dependent formation of L-aspartate-semialdehyde (L-ASA) by the reductive dephosphorylation of L-aspartyl-4-phosphate. The polypeptide is Aspartate-semialdehyde dehydrogenase (Mycobacterium bovis (strain ATCC BAA-935 / AF2122/97)).